We begin with the raw amino-acid sequence, 324 residues long: 3-hydroxyisobutyrate dehydrogenase, mitochondrial (324 aa).

The transit peptide at 1-25 (MSLRVMSPAMLNAWSQTLVRAMSTQ) directs the protein to the mitochondrion. NAD(+) is bound by residues 29 to 58 (KNIG…HVFD), 92 to 93 (LP), and Thr121. Lys196 is a catalytic residue. Lys271 serves as a coordination point for NAD(+).

The protein belongs to the HIBADH-related family. 3-hydroxyisobutyrate dehydrogenase subfamily.

It is found in the mitochondrion. It carries out the reaction 3-hydroxy-2-methylpropanoate + NAD(+) = 2-methyl-3-oxopropanoate + NADH + H(+). It participates in amino-acid degradation; L-valine degradation. The sequence is that of 3-hydroxyisobutyrate dehydrogenase, mitochondrial from Drosophila melanogaster (Fruit fly).